The sequence spans 171 residues: Protein-export protein SecB (171 aa).

It belongs to the SecB family. Homotetramer, a dimer of dimers. One homotetramer interacts with 1 SecA dimer.

Its subcellular location is the cytoplasm. Functionally, one of the proteins required for the normal export of preproteins out of the cell cytoplasm. It is a molecular chaperone that binds to a subset of precursor proteins, maintaining them in a translocation-competent state. It also specifically binds to its receptor SecA. The protein is Protein-export protein SecB of Gluconacetobacter diazotrophicus (strain ATCC 49037 / DSM 5601 / CCUG 37298 / CIP 103539 / LMG 7603 / PAl5).